A 95-amino-acid chain; its full sequence is Small ribosomal subunit protein uS19 (95 aa).

Belongs to the universal ribosomal protein uS19 family.

In terms of biological role, protein S19 forms a complex with S13 that binds strongly to the 16S ribosomal RNA. The protein is Small ribosomal subunit protein uS19 of Chloroflexus aggregans (strain MD-66 / DSM 9485).